The sequence spans 464 residues: Argininosuccinate lyase (464 aa).

Belongs to the lyase 1 family. Argininosuccinate lyase subfamily.

It is found in the cytoplasm. It catalyses the reaction 2-(N(omega)-L-arginino)succinate = fumarate + L-arginine. It functions in the pathway amino-acid biosynthesis; L-arginine biosynthesis; L-arginine from L-ornithine and carbamoyl phosphate: step 3/3. The sequence is that of Argininosuccinate lyase from Pseudomonas entomophila (strain L48).